A 159-amino-acid polypeptide reads, in one-letter code: Ribonuclease H (159 aa).

Positions 2–144 (SQDPVIIHTD…ADELATRGLQ (143 aa)) constitute an RNase H type-1 domain. Aspartate 11, glutamate 50, aspartate 72, and aspartate 136 together coordinate Mg(2+).

This sequence belongs to the RNase H family. As to quaternary structure, monomer. The cofactor is Mg(2+).

It is found in the cytoplasm. The catalysed reaction is Endonucleolytic cleavage to 5'-phosphomonoester.. Endonuclease that specifically degrades the RNA of RNA-DNA hybrids. This is Ribonuclease H from Mycolicibacterium smegmatis (strain ATCC 700084 / mc(2)155) (Mycobacterium smegmatis).